A 485-amino-acid polypeptide reads, in one-letter code: MKGRRRRRREYCKFTLLLALYTLLLLLVPSVLDSGSEQDKGGRDCPGLQRSLGVWSLEAAAAGEREQGAEVRFQAEGNPDRSPRPQGNLSAIRESVTQEKQHIYVHATWRTGSSFLGELFNQHPDVFYLYEPMWHLWQALYPGNAESLQGALRDMLRSLFRCDFSVLRLYAQPGDPAERAPDSANLTTAMLFRWRTNKVICSPPLCPAAPRARADVGLVEDKACESTCPPVPLRALEAECRKYPVVVIKDVRLLDLGVLVPLLRDPGLNLKVVQLFRDPRAVHNSRLKSRHGLLRESIQVLRTRQRGDRFQRVLLAHGVGARPGGQSRALPSAPRADFFLTSALEVICEAWLRDLLFTRGAPTWLRRRYLRLRYEDLVWQPQVQLRRLLRFSGLRTLAALDAFAFNMTRGSAYGADRPFHLSARDAREAVHAWRERLSQEQVRQVEAACDPAMRLLAYPRSGDERDVKTVRKGETPLETNANWAT.

Residues 1 to 12 (MKGRRRRRREYC) are Cytoplasmic-facing. A helical; Signal-anchor for type II membrane protein membrane pass occupies residues 13–33 (KFTLLLALYTLLLLLVPSVLD). At 34–485 (SGSEQDKGGR…PLETNANWAT (452 aa)) the chain is on the lumenal side. The segment at 66-88 (EQGAEVRFQAEGNPDRSPRPQGN) is disordered. Asn-88 carries an N-linked (GlcNAc...) asparagine glycan. 109-115 (WRTGSSF) serves as a coordination point for 3'-phosphoadenylyl sulfate. N-linked (GlcNAc...) asparagine glycosylation is present at Asn-185. Residue 277–285 (RDPRAVHNS) participates in 3'-phosphoadenylyl sulfate binding. Residue Asn-406 is glycosylated (N-linked (GlcNAc...) asparagine). Position 461 is a phosphoserine (Ser-461). The span at 465–475 (RDVKTVRKGET) shows a compositional bias: basic and acidic residues. The interval 465–485 (RDVKTVRKGETPLETNANWAT) is disordered.

Belongs to the sulfotransferase 1 family. Gal/GlcNAc/GalNAc subfamily.

It is found in the golgi apparatus membrane. It catalyses the reaction chondroitin beta-D-glucuronate + n 3'-phosphoadenylyl sulfate = chondroitin 6'-sulfate + n adenosine 3',5'-bisphosphate + n H(+). Sulfotransferase that utilizes 3'-phospho-5'-adenylyl sulfate (PAPS) as sulfonate donor to catalyze the transfer of sulfate to position 6 of non-reducing N-acetylglucosamine (GlcNAc) residues. Preferentially acts on mannose-linked GlcNAc. Also able to catalyze the transfer of sulfate to position 6 of the N-acetylgalactosamine (GalNAc) residue of chondroitin. Also acts on core 2 mucin-type oligosaccharide and N-acetyllactosamine oligomer with a lower efficiency. Has weak or no activity toward keratan sulfate and oligosaccharides containing the Galbeta1-4GlcNAc. Catalyzes 6-O-sulfation of beta-benzyl GlcNAc but not alpha- or beta-benzyl GalNAc. The sequence is that of Carbohydrate sulfotransferase 7 (Chst7) from Rattus norvegicus (Rat).